A 225-amino-acid polypeptide reads, in one-letter code: Membrane protein (225 aa).

Residues 1 to 20 (MPNETNCTLDFEQSVQLFKE) are Virion surface-facing. Residues 21 to 41 (YNLFITAFLLFLTIILQYGYA) form a helical membrane-spanning segment. Over 42-51 (TRSKVIYTLK) the chain is Intravirion. The chain crosses the membrane as a helical span at residues 52–72 (MIVLWCFWPLNIAVGVISCTY). The Virion surface segment spans residues 73 to 77 (PPNTG). Residues 78-98 (GLVAAIILTVFACLSFVGYWI) traverse the membrane as a helical segment. Residues 99 to 225 (QSIRLFKRCR…VATGGSSLYT (127 aa)) lie on the Intravirion side of the membrane.

The protein belongs to the gammacoronaviruses M protein family. Homomultimer. Interacts with envelope E protein in the budding compartment of the host cell, which is located between endoplasmic reticulum and the Golgi complex. Forms a complex with HE and S proteins. Interacts with nucleocapsid N protein. This interaction probably participates in RNA packaging into the virus.

Its subcellular location is the virion membrane. The protein resides in the host Golgi apparatus membrane. Functionally, component of the viral envelope that plays a central role in virus morphogenesis and assembly via its interactions with other viral proteins. The sequence is that of Membrane protein from Avian infectious bronchitis virus (strain Beaudette) (IBV).